Here is a 1252-residue protein sequence, read N- to C-terminus: DNA-directed RNA polymerase subunit beta (1252 aa).

It belongs to the RNA polymerase beta chain family. The RNAP catalytic core consists of 2 alpha, 1 beta, 1 beta' and 1 omega subunit. When a sigma factor is associated with the core the holoenzyme is formed, which can initiate transcription.

The catalysed reaction is RNA(n) + a ribonucleoside 5'-triphosphate = RNA(n+1) + diphosphate. Its function is as follows. DNA-dependent RNA polymerase catalyzes the transcription of DNA into RNA using the four ribonucleoside triphosphates as substrates. In Chlamydia trachomatis serovar L2 (strain ATCC VR-902B / DSM 19102 / 434/Bu), this protein is DNA-directed RNA polymerase subunit beta.